A 200-amino-acid chain; its full sequence is MQLNVNDAQAIEVSELTFGGEFNETLVHQAVVAYMAGGRQGTKQQKTRSDVAGGGKRPWRQKGTGRARAGTTRGPIWRGGGVTFAARPQDHSQKLNKKMYRAALRSILAELVRSDRLVVVQDFAVEAPKTKDLLNKLNGMGLNDVLIVSDAVDQNLYLAARNLPHVDVRDVQGSDPVSLIAYEKVLITVSAVKKFEELLG.

Residues 38–72 (GRQGTKQQKTRSDVAGGGKRPWRQKGTGRARAGTT) are disordered.

It belongs to the universal ribosomal protein uL4 family. Part of the 50S ribosomal subunit.

One of the primary rRNA binding proteins, this protein initially binds near the 5'-end of the 23S rRNA. It is important during the early stages of 50S assembly. It makes multiple contacts with different domains of the 23S rRNA in the assembled 50S subunit and ribosome. In terms of biological role, forms part of the polypeptide exit tunnel. The protein is Large ribosomal subunit protein uL4 of Pseudomonas entomophila (strain L48).